Consider the following 451-residue polypeptide: Phosphoglucosamine mutase (451 aa).

S101 acts as the Phosphoserine intermediate in catalysis. Mg(2+) is bound by residues S101, D240, D242, and D244. S101 is subject to Phosphoserine.

The protein belongs to the phosphohexose mutase family. Mg(2+) serves as cofactor. In terms of processing, activated by phosphorylation.

It catalyses the reaction alpha-D-glucosamine 1-phosphate = D-glucosamine 6-phosphate. Functionally, catalyzes the conversion of glucosamine-6-phosphate to glucosamine-1-phosphate. This chain is Phosphoglucosamine mutase, found in Thioalkalivibrio sulfidiphilus (strain HL-EbGR7).